Here is an 84-residue protein sequence, read N- to C-terminus: Exodeoxyribonuclease 7 small subunit (84 aa).

This sequence belongs to the XseB family. In terms of assembly, heterooligomer composed of large and small subunits.

It localises to the cytoplasm. It carries out the reaction Exonucleolytic cleavage in either 5'- to 3'- or 3'- to 5'-direction to yield nucleoside 5'-phosphates.. Its function is as follows. Bidirectionally degrades single-stranded DNA into large acid-insoluble oligonucleotides, which are then degraded further into small acid-soluble oligonucleotides. This Bartonella bacilliformis (strain ATCC 35685 / KC583 / Herrer 020/F12,63) protein is Exodeoxyribonuclease 7 small subunit.